A 107-amino-acid chain; its full sequence is MTHKRTKRQPAIAAGLNAPRRNRVGRQHGWPADVPSAEQRRAQRQRDLEAIRRAYAEMVATSHEIDDDTAELALLSMHLDDEQRRLEAGMKLGWHPYHFPDEPDSKQ.

Positions 1-42 (MTHKRTKRQPAIAAGLNAPRRNRVGRQHGWPADVPSAEQRRA) are disordered.

Its function is as follows. Toxic component of a type II toxin-antitoxin (TA) system. Its toxic effect is neutralized by coexpression with cognate antitoxin MT2731. The polypeptide is Toxin MT2730 (Mycobacterium tuberculosis (strain CDC 1551 / Oshkosh)).